Reading from the N-terminus, the 698-residue chain is Effector protein AvrPphDPgy (698 aa).

The span at 1–15 (MNPLRSIQHNITTPP) shows a compositional bias: polar residues. 2 disordered regions span residues 1–36 (MNPL…HPKR) and 171–200 (VDSS…DSDS). A compositionally biased stretch (low complexity) spans 172–181 (DSSSPLLSSP).

It localises to the secreted. In terms of biological role, effector protein involved in non-host recognition. The sequence is that of Effector protein AvrPphDPgy (avrPphDPgy) from Pseudomonas savastanoi pv. glycinea (Pseudomonas syringae pv. glycinea).